The primary structure comprises 114 residues: Photosystem II reaction center Psb28 protein (114 aa).

The protein belongs to the Psb28 family. As to quaternary structure, part of the photosystem II complex.

Its subcellular location is the plastid. It localises to the chloroplast thylakoid membrane. The polypeptide is Photosystem II reaction center Psb28 protein (Thalassiosira pseudonana (Marine diatom)).